The primary structure comprises 245 residues: 8-amino-3,8-dideoxy-manno-octulosonate cytidylyltransferase (245 aa).

It belongs to the KdsB family.

Its subcellular location is the cytoplasm. The catalysed reaction is 8-amino-3,8-dideoxy-alpha-D-manno-octulosonate + CTP = CMP-8-amino-3,8-dideoxy-alpha-D-manno-oct-2-ulosonate + diphosphate. The protein operates within bacterial outer membrane biogenesis; lipopolysaccharide biosynthesis. Functionally, activates KDO8N (a required 8-carbon sugar) for incorporation into bacterial lipopolysaccharide in the Shewanella genus. The sequence is that of 8-amino-3,8-dideoxy-manno-octulosonate cytidylyltransferase from Shewanella baltica (strain OS185).